The following is a 3414-amino-acid chain: Genome polyprotein (3414 aa).

The tract at residues 1-27 (MAGKAVLKGKGGGPPRRASKVAPKKTR) is disordered. The Cytoplasmic portion of the chain corresponds to 1–98 (MAGKAVLKGK…LHRRGSRRTT (98 aa)). Over residues 17 to 27 (RASKVAPKKTR) the composition is skewed to basic residues. A propeptide spans 97–117 (TTIDWMTPLLITVMLGMCLTA) (ER anchor for the capsid protein C, removed in mature form by serine protease NS3). Residues 99–117 (IDWMTPLLITVMLGMCLTA) traverse the membrane as a helical segment. The Extracellular portion of the chain corresponds to 118–242 (TVRRERDGSM…HLTRVEGWVW (125 aa)). N-linked (GlcNAc...) asparagine; by host glycosylation occurs at N144. Residues 243–260 (KNKLFTLSLVMVAWLMVD) form a helical membrane-spanning segment. Position 261 (G261) is a topological domain, cytoplasmic. The helical transmembrane segment at 262 to 280 (LLPRILIVVVALALVPAYA) threads the bilayer. Over 281–727 (SRCTHLENRD…HTVLGGAFNT (447 aa)) the chain is Extracellular. Cystine bridges form between C283/C310, C340/C396, C340/C401, C354/C385, C372/C396, and C372/C401. The tract at residues 378–391 (DRGWGNHCGLFGKG) is fusion peptide. N434 carries N-linked (GlcNAc...) asparagine; by host glycosylation. Intrachain disulfides connect C466-C570 and C587-C618. Residues 728–748 (LLGGVGFLPKILLGVAMAWLG) form a helical membrane-spanning segment. Topologically, residues 749-755 (LNMRNPT) are cytoplasmic. Residues 756-776 (LSMGFLLSGGLVLAMTLGVGA) form a helical membrane-spanning segment. The Extracellular portion of the chain corresponds to 777 to 1187 (DVGCAVDTER…LVSVESLFRY (411 aa)). Intrachain disulfides connect C780–C791, C831–C920, C955–C1000, C1057–C1106, C1068–C1090, and C1089–C1093. 3 N-linked (GlcNAc...) asparagine; by host glycosylation sites follow: N861, N983, and N999. The chain crosses the membrane as a helical span at residues 1188–1208 (LVAVGLVFQLELGPEAVAMVL). Residues 1209-1232 (LQAVFEMRTCLLSGFVLRRSITTR) lie on the Cytoplasmic side of the membrane. Residues 1233–1253 (EIVTVYFLLLVLEMGIPVKGL) form a helical membrane-spanning segment. Over 1254–1267 (EHLWRWTDALAMGA) the chain is Lumenal. A helical transmembrane segment spans residues 1268-1288 (IIFRACTAEGKTGIGLLLAAF). At 1289-1300 (MTQSDMNIIHDG) the chain is on the cytoplasmic side. The chain crosses the membrane as a helical span at residues 1301–1319 (LTAFLCVATTMAIWRYIRG). Topologically, residues 1320–1325 (QGERKG) are lumenal. A helical membrane pass occupies residues 1326 to 1346 (LTWIVPLAGILGGEGSGVRLL). Topologically, residues 1347–1359 (AFWELAASRGRRS) are cytoplasmic. The helical transmembrane segment at 1360-1378 (FNEPMTVIGVMLTLASGMM) threads the bilayer. Residues 1379 to 1382 (RHTS) lie on the Lumenal side of the membrane. A helical transmembrane segment spans residues 1383-1403 (QEAVCAMALAAFLLLMLTLGT). At 1404 to 1454 (RKMQLLAEWSGNIEWNPELTSEGGEVSLRVRQDALGNLHLTELEKEERMMA) the chain is on the cytoplasmic side. Residues 1410–1449 (AEWSGNIEWNPELTSEGGEVSLRVRQDALGNLHLTELEKE) form an interacts with and activates NS3 protease region. The segment at residues 1455 to 1475 (FWLVVGLIASAFHWSGILIVM) is an intramembrane region (helical). The Cytoplasmic portion of the chain corresponds to 1476–2160 (GLWTISEMLG…RIGERDAPEA (685 aa)). The region spanning 1490 to 1669 (TDLVFSGCSE…EVEKSRPNLP (180 aa)) is the Peptidase S7 domain. Catalysis depends on charge relay system; for serine protease NS3 activity residues H1543, D1567, and S1627. The 157-residue stretch at 1675-1831 (TGWTAKGQIT…ESNGAIASEE (157 aa)) folds into the Helicase ATP-binding domain. An ATP-binding site is contributed by 1688–1695 (MHPGSGKT). Residues 1779–1782 (DEAH) carry the DEAH box motif. In terms of domain architecture, Helicase C-terminal spans 1841–2000 (DGFDWITEYE…TARGPVATFY (160 aa)). Position 1883 is an N6-acetyllysine; by host (K1883). The helical transmembrane segment at 2161–2181 (FLTAVEMLVLGLATLGVVWCF) threads the bilayer. Topologically, residues 2182 to 2189 (VVRTSVSR) are lumenal. The segment at residues 2190–2209 (MVLGTLVLATSLIFLWAGGV) is an intramembrane region (helical). Position 2210 (G2210) is a topological domain, lumenal. The chain crosses the membrane as a helical span at residues 2211 to 2231 (YGNMAGVALVFYTLLTVLQPE). At 2232 to 2238 (TGKQRSS) the chain is on the cytoplasmic side. Residues 2239 to 2259 (DDNKLAYFLLTLCGLAGMVAA) form a helical membrane-spanning segment. Residues 2260 to 2296 (NEMGLLEKTKADLAALFARDQGETVRWGEWTNLDIQP) are Lumenal-facing. Positions 2297–2315 (ARSWGTYVLVVSLFTPYML) form an intramembrane region, helical. Over 2316–2343 (HQLQTRIQQLVNSAVASGAQAMRDLGGG) the chain is Lumenal. The helical intramembrane region spans 2344-2364 (TPFFGVAGHVLALGVASLVGA). The Lumenal portion of the chain corresponds to 2365–2368 (TPTS). Residues 2369 to 2389 (LILGVGLAAFHLAIVVSGLEA) form a helical membrane-spanning segment. Residues 2390 to 2432 (ELTQRAHKVFFSAMVRNPMVDGDVINPFGDGEAKPALYERKLS) are Cytoplasmic-facing. The helical transmembrane segment at 2433–2453 (LILALVLCLASVVMNRTFVAV) threads the bilayer. At 2454 to 2477 (TEAGAVGVAAAMQLLRPEMDVLWT) the chain is on the lumenal side. A helical membrane pass occupies residues 2478-2498 (MPVACGMSGVVRGSLWGLLPL). The Cytoplasmic segment spans residues 2499–3414 (GHRLWLRTTG…WELKLESSIF (916 aa)). The region spanning 2512-2776 (GGSEGDTLGD…EIDLGVGTRS (265 aa)) is the mRNA cap 0-1 NS5-type MT domain. S2567 provides a ligand contact to S-adenosyl-L-methionine. S2567 is subject to Phosphoserine. The For 2'-O-MTase activity role is filled by K2572. S-adenosyl-L-methionine-binding residues include G2597, W2598, T2615, I2616, D2642, and V2643. D2657 functions as the For 2'-O-MTase activity in the catalytic mechanism. Position 2658 (I2658) interacts with S-adenosyl-L-methionine. Residues K2694 and E2730 each act as for 2'-O-MTase activity in the active site. The interaction with host SCRIB stretch occupies residues 2730–2734 (EMYFS). Y2732 provides a ligand contact to S-adenosyl-L-methionine. Residues E2950, H2954, C2959, and C2962 each coordinate Zn(2+). The RdRp catalytic domain occupies 3040–3189 (GLFYADDTAG…RPVDDRFSKA (150 aa)). Zn(2+) is bound by residues H3224, C3240, and C3359.

In the N-terminal section; belongs to the class I-like SAM-binding methyltransferase superfamily. mRNA cap 0-1 NS5-type methyltransferase family. In terms of assembly, homodimer. Interacts (via N-terminus) with host EXOC1 (via C-terminus); this interaction results in EXOC1 degradation through the proteasome degradation pathway. Forms heterodimers with envelope protein E in the endoplasmic reticulum and Golgi. As to quaternary structure, homodimer; in the endoplasmic reticulum and Golgi. Interacts with protein prM. Interacts with non-structural protein 1. In terms of assembly, homodimer; Homohexamer when secreted. Interacts with envelope protein E. Interacts (via N-terminus) with serine protease NS3. As to quaternary structure, forms a heterodimer with serine protease NS3. May form homooligomers. In terms of assembly, forms a heterodimer with NS2B. Interacts with non-structural protein 2A (via N-terminus). Interacts with NS4B. Interacts with unphosphorylated RNA-directed RNA polymerase NS5; this interaction stimulates RNA-directed RNA polymerase NS5 guanylyltransferase activity. Interacts with serine protease NS3. Interacts with NS1. As to quaternary structure, homodimer. Interacts with host STAT2; this interaction inhibits the phosphorylation of the latter, and, when all viral proteins are present (polyprotein), targets STAT2 for degradation. Interacts with serine protease NS3. Interacts with host SCRIB; this interaction targets NS5 to the cell membrane periphery and nucleus, thereby allowing efficient host nuclear STAT1 inhibition. Specific enzymatic cleavages in vivo yield mature proteins. Cleavages in the lumen of endoplasmic reticulum are performed by host signal peptidase, whereas cleavages in the cytoplasmic side are performed by serine protease NS3. Signal cleavage at the 2K-4B site requires a prior NS3 protease-mediated cleavage at the 4A-2K site. Post-translationally, cleaved in post-Golgi vesicles by a host furin, releasing the mature small envelope protein M, and peptide pr. This cleavage is incomplete as up to 30% of viral particles still carry uncleaved prM. In terms of processing, N-glycosylated. N-glycosylated. The excreted form is glycosylated and this is required for efficient secretion of the protein from infected cells. Post-translationally, acetylated by host KAT5. Acetylation modulates NS3 RNA-binding and unwinding activities and plays an important positive role for viral replication. In terms of processing, phosphorylated on serines residues. This phosphorylation may trigger NS5 nuclear localization.

The protein resides in the virion. It is found in the host nucleus. The protein localises to the host cytoplasm. Its subcellular location is the host perinuclear region. It localises to the secreted. The protein resides in the virion membrane. It is found in the host endoplasmic reticulum membrane. It carries out the reaction Selective hydrolysis of -Xaa-Xaa-|-Yaa- bonds in which each of the Xaa can be either Arg or Lys and Yaa can be either Ser or Ala.. The enzyme catalyses RNA(n) + a ribonucleoside 5'-triphosphate = RNA(n+1) + diphosphate. It catalyses the reaction a ribonucleoside 5'-triphosphate + H2O = a ribonucleoside 5'-diphosphate + phosphate + H(+). The catalysed reaction is ATP + H2O = ADP + phosphate + H(+). It carries out the reaction a 5'-end (5'-triphosphoguanosine)-ribonucleoside in mRNA + S-adenosyl-L-methionine = a 5'-end (N(7)-methyl 5'-triphosphoguanosine)-ribonucleoside in mRNA + S-adenosyl-L-homocysteine. The enzyme catalyses a 5'-end (N(7)-methyl 5'-triphosphoguanosine)-ribonucleoside in mRNA + S-adenosyl-L-methionine = a 5'-end (N(7)-methyl 5'-triphosphoguanosine)-(2'-O-methyl-ribonucleoside) in mRNA + S-adenosyl-L-homocysteine + H(+). Functionally, plays a role in virus budding by binding to membrane and gathering the viral RNA into a nucleocapsid that forms the core of a mature virus particle. During virus entry, may induce genome penetration in host cytoplasm after hemifusion induced by surface proteins. Can migrate to the cell nucleus where it modulates host functions. Its function is as follows. Inhibits RNA silencing by interfering with host Dicer. Prevents premature fusion activity of envelope proteins in trans-Golgi by binding to envelope protein E at pH6.0. After virion release in extracellular space gets dissociated from E dimers. In terms of biological role, acts as a chaperone for envelope protein E during intracellular virion assembly by masking and inactivating envelope protein E fusion peptide. prM is the only viral peptide matured by host furin in the trans-Golgi network. Presumably to avoid catastrophic activation of the viral fusion activity in acidic GolGi compartment prior to virion release. prM-E cleavage is ineficient, and many virions are only partially matured. These uncleaved prM would play a role in immune evasion. Functionally, may play a role in virus budding. Exerts cytotoxic effects by activating a mitochondrial apoptotic pathway through M extodomain. May display a viroporin activity. Its function is as follows. Binds to host cell surface receptor and mediates fusion between viral and cellular membranes. Envelope protein is synthesized in the endoplasmic reticulum in the form of heterodimer with protein prM. They play a role in virion budding in the ER, and the newly formed immature particle is covered with 60 spikes composed of heterodimer between precursor prM and envelope protein E. The virion is transported to the Golgi apparatus where the low pH causes dissociation of PrM-E heterodimers and formation of E homodimers. prM-E cleavage is ineficient, and many virions are only partially matured. These uncleaved prM would play a role in immune evasion. Involved in immune evasion, pathogenesis and viral replication. Once cleaved off the polyprotein, is targeted to three destinations: the viral replication cycle, the plasma membrane and the extracellular compartment. Essential for viral replication. Required for formation of the replication complex and recruitment of other non-structural proteins to the ER-derived membrane structures. Excreted as a hexameric lipoparticle that plays a role against host immune response. Antagonizing the complement function. Binds to the host macrophages and dendritic cells. Inhibits signal transduction originating from Toll-like receptor 3 (TLR3). In terms of biological role, component of the viral RNA replication complex that functions in virion assembly and antagonizes the host immune response. Functionally, required cofactor for the serine protease function of NS3. May have membrane-destabilizing activity and form viroporins. Its function is as follows. Displays three enzymatic activities: serine protease, NTPase and RNA helicase. NS3 serine protease, in association with NS2B, performs its autocleavage and cleaves the polyprotein at dibasic sites in the cytoplasm: C-prM, NS2A-NS2B, NS2B-NS3, NS3-NS4A, NS4A-2K and NS4B-NS5. NS3 RNA helicase binds RNA and unwinds dsRNA in the 3' to 5' direction. Regulates the ATPase activity of the NS3 helicase activity. NS4A allows NS3 helicase to conserve energy during unwinding. In terms of biological role, functions as a signal peptide for NS4B and is required for the interferon antagonism activity of the latter. Functionally, induces the formation of ER-derived membrane vesicles where the viral replication takes place. Inhibits interferon (IFN)-induced host STAT1 phosphorylation and nuclear translocation, thereby preventing the establishment of cellular antiviral state by blocking the IFN-alpha/beta pathway. Inhibits STAT2 translocation in the nucleus after IFN-alpha treatment. Its function is as follows. Replicates the viral (+) and (-) genome, and performs the capping of genomes in the cytoplasm. NS5 methylates viral RNA cap at guanine N-7 and ribose 2'-O positions. Besides its role in genome replication, also prevents the establishment of cellular antiviral state by blocking the interferon-alpha/beta (IFN-alpha/beta) signaling pathway. Inhibits host TYK2 and STAT2 phosphorylation, thereby preventing activation of JAK-STAT signaling pathway. In Homo sapiens (Human), this protein is Genome polyprotein.